The primary structure comprises 220 residues: MFGSKYLLILLAGLVICSQAIGIRRIPVEVYVSEAGRKKFLDKGRSIEDIVGSVAEELELKMNEHVYADRASTDKRKFHFDWNVSGMTSSEIDLDKCGKDTNRFQYDLVQAARDKAGVSVILLYTCESEGYSEDFILAGQKTPLVIQRKYPECSNDVATFTETEPMKIESIIANALFITAGSPLNDMVEFEEVDNGRDGFKRDIRLKTTDFSLFSGGVCH.

Positions 1–20 are cleaved as a signal peptide; sequence MFGSKYLLILLAGLVICSQA. Asn-83 carries N-linked (GlcNAc...) asparagine glycosylation.

It localises to the spore wall. This is Spore wall protein ECU02_0150 from Encephalitozoon cuniculi (strain GB-M1) (Microsporidian parasite).